The following is a 262-amino-acid chain: Ribosomal RNA small subunit methyltransferase A (262 aa).

6 residues coordinate S-adenosyl-L-methionine: Asn-13, Leu-15, Gly-40, Glu-61, Asp-85, and Asn-104.

The protein belongs to the class I-like SAM-binding methyltransferase superfamily. rRNA adenine N(6)-methyltransferase family. RsmA subfamily.

It localises to the cytoplasm. It catalyses the reaction adenosine(1518)/adenosine(1519) in 16S rRNA + 4 S-adenosyl-L-methionine = N(6)-dimethyladenosine(1518)/N(6)-dimethyladenosine(1519) in 16S rRNA + 4 S-adenosyl-L-homocysteine + 4 H(+). Functionally, specifically dimethylates two adjacent adenosines (A1518 and A1519) in the loop of a conserved hairpin near the 3'-end of 16S rRNA in the 30S particle. May play a critical role in biogenesis of 30S subunits. The protein is Ribosomal RNA small subunit methyltransferase A of Chromobacterium violaceum (strain ATCC 12472 / DSM 30191 / JCM 1249 / CCUG 213 / NBRC 12614 / NCIMB 9131 / NCTC 9757 / MK).